Here is a 77-residue protein sequence, read N- to C-terminus: Acyl carrier protein (77 aa).

A Carrier domain is found at 2 to 77 (SDIEQRVKNV…LAIDYVKSHQ (76 aa)). At serine 37 the chain carries O-(pantetheine 4'-phosphoryl)serine.

Belongs to the acyl carrier protein (ACP) family. Post-translationally, 4'-phosphopantetheine is transferred from CoA to a specific serine of apo-ACP by AcpS. This modification is essential for activity because fatty acids are bound in thioester linkage to the sulfhydryl of the prosthetic group.

The protein resides in the cytoplasm. It functions in the pathway lipid metabolism; fatty acid biosynthesis. Functionally, carrier of the growing fatty acid chain in fatty acid biosynthesis. The polypeptide is Acyl carrier protein (Leucothrix mucor).